Consider the following 128-residue polypeptide: RutC family protein BU371 (128 aa).

It belongs to the RutC family.

The chain is RutC family protein BU371 from Buchnera aphidicola subsp. Acyrthosiphon pisum (strain APS) (Acyrthosiphon pisum symbiotic bacterium).